The following is a 550-amino-acid chain: 65-kDa microtubule-associated protein 5 (550 aa).

2 coiled-coil regions span residues 46–174 and 288–310; these read NKKV…QKVN and IREA…KELV. Positions 471–531 are disordered; sequence QFREQKRLQG…PGRSVTSGGK (61 aa). A compositionally biased stretch (polar residues) spans 502–511; it reads QSLNTDNVTK.

The protein belongs to the MAP65/ASE1 family. As to quaternary structure, forms a dimer. Binds to MT, mostly with coaligned MT, both between parallel or antiparallel, forming thick bundles. Bundles polymerized MT via the formation of 25-nm crossbridges with cortical MT.

The protein localises to the nucleus. It is found in the cytoplasm. Its subcellular location is the cytoskeleton. It localises to the spindle. The protein resides in the phragmoplast. The protein localises to the cell cortex. It is found in the cell junction. Its subcellular location is the plasmodesma. Functionally, microtubule-associated protein that bundle and stabilize adjacent microtubules (MT) of the cell cortex. Confers MT resistance to the drug oryzalin. Promotes the formation of a planar network of antiparallel microtubules. The protein is 65-kDa microtubule-associated protein 5 (MAP65-5) of Arabidopsis thaliana (Mouse-ear cress).